Consider the following 388-residue polypeptide: S-adenosylmethionine synthase (388 aa).

His16 is a binding site for ATP. Residue Asp18 coordinates Mg(2+). A K(+)-binding site is contributed by Glu44. Residues Glu57 and Gln100 each coordinate L-methionine. Positions 100 to 110 are flexible loop; the sequence is QSADIAQGVNE. Residues 167–169, 233–234, Asp242, 248–249, Ala265, and Lys269 contribute to the ATP site; these read DAK, RF, and RK. Residue Asp242 coordinates L-methionine. Lys273 is a binding site for L-methionine.

It belongs to the AdoMet synthase family. As to quaternary structure, homotetramer; dimer of dimers. Mg(2+) is required as a cofactor. The cofactor is K(+).

Its subcellular location is the cytoplasm. It carries out the reaction L-methionine + ATP + H2O = S-adenosyl-L-methionine + phosphate + diphosphate. Its pathway is amino-acid biosynthesis; S-adenosyl-L-methionine biosynthesis; S-adenosyl-L-methionine from L-methionine: step 1/1. In terms of biological role, catalyzes the formation of S-adenosylmethionine (AdoMet) from methionine and ATP. The overall synthetic reaction is composed of two sequential steps, AdoMet formation and the subsequent tripolyphosphate hydrolysis which occurs prior to release of AdoMet from the enzyme. This is S-adenosylmethionine synthase from Aromatoleum aromaticum (strain DSM 19018 / LMG 30748 / EbN1) (Azoarcus sp. (strain EbN1)).